We begin with the raw amino-acid sequence, 400 residues long: MPSVEESLALIKRGAEEIIQEEGLIEKLKRGEPLRIKAGFDPTAPDLHLGHTVLINKLRQFQDLGHQVIFLIGDFTGMIGDPTGKSATRPPLTKEDVAQNAQTYKEQVFKILDPKKTEVRFNSEWMDKLSAADMIRLAGQYTVARMLERDDFHKRYHGEQSISIHEFLYPLVQGYDSVALRADVELGGTDQKFNLLMGRMLQKHYDQEPQVIMTMPILEGLDGVQKMSKSLGNYIGVNDLPGEMFGKLLSIPDELMWRYFELLSFRDMAEIEDFKVQVNAGENPQNIKRLLAEEIVARFHGGEAAQSAHKSAGNQVKLGEIPENVPVVHLEESDDQTEFSISYILRRADLVKNGAAAKDVLGRGAVFVDGAQVDPSFMVQRGSEHVIQAGKKKIAQIFVK.

Residues 42 to 51 (PTAPDLHLGH) carry the 'HIGH' region motif. Positions 226–230 (KMSKS) match the 'KMSKS' region motif. Position 229 (Lys229) interacts with ATP. An S4 RNA-binding domain is found at 339–399 (FSISYILRRA…GKKKIAQIFV (61 aa)).

The protein belongs to the class-I aminoacyl-tRNA synthetase family. TyrS type 2 subfamily. In terms of assembly, homodimer.

The protein resides in the cytoplasm. The enzyme catalyses tRNA(Tyr) + L-tyrosine + ATP = L-tyrosyl-tRNA(Tyr) + AMP + diphosphate + H(+). In terms of biological role, catalyzes the attachment of tyrosine to tRNA(Tyr) in a two-step reaction: tyrosine is first activated by ATP to form Tyr-AMP and then transferred to the acceptor end of tRNA(Tyr). The protein is Tyrosine--tRNA ligase of Hahella chejuensis (strain KCTC 2396).